Consider the following 358-residue polypeptide: MELGSADAFDRMGTLGVEEEFYIVDADGRPTSGIDDLVYGPEPPEPLAGRLDHELFQFTIETQTPLIEDPDEAGAAVSTVREALVDHAAAHGYRIAAAGLHPAAKWRELDHATKPRYQAQLDRIQYPQHRNTTAGLHVHVGVDDADKAVWVANELRWYLAPLLALSANSPFWNGFDTGLASARAKVFENLPNTGMPTAFDDFEEFQRFERRMVEYGSIDDRGELWYDVRPHTGHGTVEIRTPDAQTDPERVTDFVEYVHALVLDLADRYEAGESGTSVRRELLDENKWRATRYGRDTDFIAPDSEGVVSLVSFVETESDRLGVDGLRSLLDAESGTAVQRRIHEESGLDGLCEHLTLD.

The protein belongs to the glutamate--cysteine ligase type 2 family. YbdK subfamily.

It carries out the reaction L-cysteine + L-glutamate + ATP = gamma-L-glutamyl-L-cysteine + ADP + phosphate + H(+). Its function is as follows. Catalyzes the synthesis of gamma-glutamylcysteine (gamma-GC), the main low-molecular-weight thiol compound instead of glutathione in halophilic archaea. This Haloferax volcanii (strain ATCC 29605 / DSM 3757 / JCM 8879 / NBRC 14742 / NCIMB 2012 / VKM B-1768 / DS2) (Halobacterium volcanii) protein is Glutamate--cysteine ligase.